A 292-amino-acid chain; its full sequence is GTP cyclohydrolase FolE2 (292 aa).

It belongs to the GTP cyclohydrolase IV family.

It carries out the reaction GTP + H2O = 7,8-dihydroneopterin 3'-triphosphate + formate + H(+). It participates in cofactor biosynthesis; 7,8-dihydroneopterin triphosphate biosynthesis; 7,8-dihydroneopterin triphosphate from GTP: step 1/1. Its function is as follows. Converts GTP to 7,8-dihydroneopterin triphosphate. The chain is GTP cyclohydrolase FolE2 from Staphylococcus epidermidis (strain ATCC 35984 / DSM 28319 / BCRC 17069 / CCUG 31568 / BM 3577 / RP62A).